A 332-amino-acid chain; its full sequence is tRNA N6-adenosine threonylcarbamoyltransferase (332 aa).

Fe cation is bound by residues His-108 and His-112. Substrate-binding positions include 129–133, Asp-161, Glu-178, and Ser-258; that span reads LISGG. Residue Asp-286 participates in Fe cation binding.

The protein belongs to the KAE1 / TsaD family. It depends on Fe(2+) as a cofactor.

Its subcellular location is the cytoplasm. The enzyme catalyses L-threonylcarbamoyladenylate + adenosine(37) in tRNA = N(6)-L-threonylcarbamoyladenosine(37) in tRNA + AMP + H(+). Functionally, required for the formation of a threonylcarbamoyl group on adenosine at position 37 (t(6)A37) in tRNAs that read codons beginning with adenine. Is probably involved in the transfer of the threonylcarbamoyl moiety of threonylcarbamoyl-AMP (TC-AMP) to the N6 group of A37. The sequence is that of tRNA N6-adenosine threonylcarbamoyltransferase from Pyrobaculum arsenaticum (strain DSM 13514 / JCM 11321 / PZ6).